Consider the following 307-residue polypeptide: Protoheme IX farnesyltransferase (307 aa).

A run of 9 helical transmembrane segments spans residues 31-51, 52-72, 102-119, 123-145, 151-171, 179-199, 225-245, 247-267, and 281-301; these read VMSL…YSVH, PFIA…AGAI, ALSF…FMAL, LLAS…IWLK, NIVI…AAVS, VILF…LALF, ILIY…IGMS, FIYL…AGSL, and FVYS…TNTI.

Belongs to the UbiA prenyltransferase family. Protoheme IX farnesyltransferase subfamily.

It localises to the cell inner membrane. It catalyses the reaction heme b + (2E,6E)-farnesyl diphosphate + H2O = Fe(II)-heme o + diphosphate. The protein operates within porphyrin-containing compound metabolism; heme O biosynthesis; heme O from protoheme: step 1/1. Functionally, converts heme B (protoheme IX) to heme O by substitution of the vinyl group on carbon 2 of heme B porphyrin ring with a hydroxyethyl farnesyl side group. The sequence is that of Protoheme IX farnesyltransferase from Rickettsia canadensis (strain McKiel).